Consider the following 321-residue polypeptide: MTQWKRRSRRKGMRTRNNKQLIKLILTKSREICNTIRPSQYNKRGRPRVYEDHLIVAALLIKILENLSLRDLEERLKDLFPKVPDFTTLHYRFRKLNRGYLKELIHRTAKEIMEKLQAKEFYCLIADGTGFGYAQAYELKWKKGKELRNVKSHVKTEVLVGVVRNKAIVVDINTGKSYADENMLLRSMLKELGFRARYFLGDAYYGKSAGVLEEIKKLRMESIVPVRDTAHTRVRNMYRLWAKRNYEIRRKVYRKNRYRVEQVIGIVKNRFGDRDNVYDFEIASLYVLGRFVLYNLILLLKLLLLCLNLLRITWASSRFIL.

This is an uncharacterized protein from Aquifex aeolicus (strain VF5).